The chain runs to 409 residues: Multifunctional CCA protein (409 aa).

Residues Gly8 and Arg11 each coordinate ATP. CTP-binding residues include Gly8 and Arg11. 2 residues coordinate Mg(2+): Glu21 and Asp23. ATP is bound by residues Arg91, Arg137, and Arg140. 3 residues coordinate CTP: Arg91, Arg137, and Arg140. Residues 228 to 329 (TGVHTLMVLT…LKALEGLDAF (102 aa)) enclose the HD domain.

It belongs to the tRNA nucleotidyltransferase/poly(A) polymerase family. Bacterial CCA-adding enzyme type 1 subfamily. Monomer. Can also form homodimers and oligomers. Requires Mg(2+) as cofactor. Ni(2+) serves as cofactor.

It catalyses the reaction a tRNA precursor + 2 CTP + ATP = a tRNA with a 3' CCA end + 3 diphosphate. It carries out the reaction a tRNA with a 3' CCA end + 2 CTP + ATP = a tRNA with a 3' CCACCA end + 3 diphosphate. In terms of biological role, catalyzes the addition and repair of the essential 3'-terminal CCA sequence in tRNAs without using a nucleic acid template. Adds these three nucleotides in the order of C, C, and A to the tRNA nucleotide-73, using CTP and ATP as substrates and producing inorganic pyrophosphate. tRNA 3'-terminal CCA addition is required both for tRNA processing and repair. Also involved in tRNA surveillance by mediating tandem CCA addition to generate a CCACCA at the 3' terminus of unstable tRNAs. While stable tRNAs receive only 3'-terminal CCA, unstable tRNAs are marked with CCACCA and rapidly degraded. The sequence is that of Multifunctional CCA protein from Thioalkalivibrio sulfidiphilus (strain HL-EbGR7).